The chain runs to 304 residues: Protein translocase subunit SecF (304 aa).

6 helical membrane-spanning segments follow: residues 20–40 (AKLFFIISGVLIVISLFLIFT), 143–163 (AMMALLYANIGVLIYVAIRFE), 164–184 (LIFAIGAILALVHDVIITLGF), 195–215 (TVVAALLALIGYSLNDTIVVF), 244–266 (LSRTIITSLLTFFTVLSLMIFGG), and 276–298 (LVIGIIVGTYSSIGIASGLVYLI).

It belongs to the SecD/SecF family. SecF subfamily. Forms a complex with SecD. Part of the essential Sec protein translocation apparatus which comprises SecA, SecYEG and auxiliary proteins SecDF. Other proteins may also be involved.

It localises to the cell inner membrane. Its function is as follows. Part of the Sec protein translocase complex. Interacts with the SecYEG preprotein conducting channel. SecDF uses the proton motive force (PMF) to complete protein translocation after the ATP-dependent function of SecA. This Calditerrivibrio nitroreducens (strain DSM 19672 / NBRC 101217 / Yu37-1) protein is Protein translocase subunit SecF.